Consider the following 864-residue polypeptide: Eukaryotic translation initiation factor 3 subunit C (864 aa).

A disordered region spans residues 1–77; the sequence is MSRFFARGGS…EESEDEERVT (77 aa). A compositionally biased stretch (acidic residues) spans 14–54; the sequence is SSSEDEQELYSDREEEEQFSDSEEESSEAESSEEESSDDEG. In terms of domain architecture, PCI spans 602-776; sequence FHMHINLELL…NAIVFRKGVE (175 aa). The disordered stretch occupies residues 815–864; the sequence is RDQGAGARGGRGAGRGGQARGGPRFPGGQQGRRPGGQQFSGGALGGAIKA. Residues 820–864 are compositionally biased toward gly residues; it reads GARGGRGAGRGGQARGGPRFPGGQQGRRPGGQQFSGGALGGAIKA.

The protein belongs to the eIF-3 subunit C family. In terms of assembly, component of the eukaryotic translation initiation factor 3 (eIF-3) complex.

The protein localises to the cytoplasm. Component of the eukaryotic translation initiation factor 3 (eIF-3) complex, which is involved in protein synthesis of a specialized repertoire of mRNAs and, together with other initiation factors, stimulates binding of mRNA and methionyl-tRNAi to the 40S ribosome. The eIF-3 complex specifically targets and initiates translation of a subset of mRNAs involved in cell proliferation. The polypeptide is Eukaryotic translation initiation factor 3 subunit C (nip1) (Aspergillus terreus (strain NIH 2624 / FGSC A1156)).